A 110-amino-acid polypeptide reads, in one-letter code: UPF0060 membrane protein Dtpsy_1668 (110 aa).

Transmembrane regions (helical) follow at residues 7-27 (LALFLLTAVAEIVGCYLPWLW), 33-53 (SAWLLVPAAASLALFAWLLTL), 63-83 (AAYGGVYVAVALVWLWTVDGV), and 86-106 (GPWDWLGVSVTLCGMAIIAFA).

The protein belongs to the UPF0060 family.

The protein resides in the cell inner membrane. This chain is UPF0060 membrane protein Dtpsy_1668, found in Acidovorax ebreus (strain TPSY) (Diaphorobacter sp. (strain TPSY)).